A 319-amino-acid chain; its full sequence is Ribosomal RNA small subunit methyltransferase H (319 aa).

S-adenosyl-L-methionine contacts are provided by residues 34–36 (GGH), D54, F83, D104, and Q111.

It belongs to the methyltransferase superfamily. RsmH family.

It localises to the cytoplasm. It catalyses the reaction cytidine(1402) in 16S rRNA + S-adenosyl-L-methionine = N(4)-methylcytidine(1402) in 16S rRNA + S-adenosyl-L-homocysteine + H(+). Its function is as follows. Specifically methylates the N4 position of cytidine in position 1402 (C1402) of 16S rRNA. The sequence is that of Ribosomal RNA small subunit methyltransferase H from Lactiplantibacillus plantarum (strain ATCC BAA-793 / NCIMB 8826 / WCFS1) (Lactobacillus plantarum).